The chain runs to 341 residues: Phosphoribosylformylglycinamidine cyclo-ligase (341 aa).

It belongs to the AIR synthase family.

The protein localises to the cytoplasm. It catalyses the reaction 2-formamido-N(1)-(5-O-phospho-beta-D-ribosyl)acetamidine + ATP = 5-amino-1-(5-phospho-beta-D-ribosyl)imidazole + ADP + phosphate + H(+). Its pathway is purine metabolism; IMP biosynthesis via de novo pathway; 5-amino-1-(5-phospho-D-ribosyl)imidazole from N(2)-formyl-N(1)-(5-phospho-D-ribosyl)glycinamide: step 2/2. The protein is Phosphoribosylformylglycinamidine cyclo-ligase of Xanthomonas campestris pv. campestris (strain 8004).